A 530-amino-acid polypeptide reads, in one-letter code: UDP-glucuronosyltransferase 2A3 (530 aa).

A signal peptide spans 1 to 23; it reads MAPGKLASAVLLLLLCCAGSGFC. The Extracellular segment spans residues 24-494; that stretch reads GKVLVWPCEM…SWFQYHSLDV (471 aa). The N-linked (GlcNAc...) asparagine glycan is linked to Asn-316. The helical transmembrane segment at 495 to 515 threads the bilayer; sequence IGFLLACVASAILLVTKCCLF. Residues 516 to 530 lie on the Cytoplasmic side of the membrane; sequence SFQNFIKIGKRIKKE.

This sequence belongs to the UDP-glycosyltransferase family. In terms of tissue distribution, specifically expressed in liver and small intestine.

The protein localises to the membrane. The catalysed reaction is glucuronate acceptor + UDP-alpha-D-glucuronate = acceptor beta-D-glucuronoside + UDP + H(+). Functionally, UDP-glucuronosyltransferases catalyze phase II biotransformation reactions in which lipophilic substrates are conjugated with glucuronic acid to increase water solubility and enhance excretion. They are of major importance in the conjugation and subsequent elimination of potentially toxic xenobiotics and endogenous compounds. The chain is UDP-glucuronosyltransferase 2A3 (UGT2A3) from Cavia porcellus (Guinea pig).